Consider the following 58-residue polypeptide: COP9 signalosome complex subunit 6b (58 aa).

Belongs to the peptidase M67A family. CSN6 subfamily. In terms of assembly, component of the CSN complex, probably composed of CSN1, CSN2, CSN3, CSN4, CSN5 (CSN5A or CSN5B), CSN6 (CSN6A or CSN6B), CSN7 and CSN8.

Its subcellular location is the cytoplasm. The protein localises to the nucleus. In terms of biological role, component of the COP9 signalosome complex (CSN), a complex involved in various cellular and developmental processes such as photomorphogenesis and auxin and jasmonate responses. The CSN complex is an essential regulator of the ubiquitin (Ubl) conjugation pathway by mediating the deneddylation of the cullin subunits of SCF-type E3 ligase complexes, leading to decrease the Ubl ligase activity of SCF. It is involved in repression of photomorphogenesis in darkness by regulating the activity of COP1-containing Ubl ligase complexes. This Brassica oleracea (Wild cabbage) protein is COP9 signalosome complex subunit 6b (CSN6B).